Here is a 366-residue protein sequence, read N- to C-terminus: Phenylalanine--tRNA ligase alpha subunit (366 aa).

E264 lines the Mg(2+) pocket.

Belongs to the class-II aminoacyl-tRNA synthetase family. Phe-tRNA synthetase alpha subunit type 1 subfamily. In terms of assembly, tetramer of two alpha and two beta subunits. Mg(2+) is required as a cofactor.

The protein localises to the cytoplasm. The catalysed reaction is tRNA(Phe) + L-phenylalanine + ATP = L-phenylalanyl-tRNA(Phe) + AMP + diphosphate + H(+). The polypeptide is Phenylalanine--tRNA ligase alpha subunit (Zymomonas mobilis subsp. mobilis (strain ATCC 31821 / ZM4 / CP4)).